Consider the following 155-residue polypeptide: Ribosomal RNA large subunit methyltransferase H (155 aa).

S-adenosyl-L-methionine is bound by residues leucine 72, glycine 103, and 122 to 127 (LSALTL).

This sequence belongs to the RNA methyltransferase RlmH family. In terms of assembly, homodimer.

Its subcellular location is the cytoplasm. It catalyses the reaction pseudouridine(1915) in 23S rRNA + S-adenosyl-L-methionine = N(3)-methylpseudouridine(1915) in 23S rRNA + S-adenosyl-L-homocysteine + H(+). Specifically methylates the pseudouridine at position 1915 (m3Psi1915) in 23S rRNA. In Cronobacter sakazakii (strain ATCC BAA-894) (Enterobacter sakazakii), this protein is Ribosomal RNA large subunit methyltransferase H.